Reading from the N-terminus, the 569-residue chain is Paxillin-B (569 aa).

The short motif at 10–18 is the LD motif 1 element; it reads DLDLLLADL. Residues 62-78 are compositionally biased toward polar residues; it reads QPQTVQTISTPAPKNHN. The interval 62 to 103 is disordered; it reads QPQTVQTISTPAPKNHNTTTTTASFSVSSQPAPQPPQQSQQI. Over residues 79-102 the composition is skewed to low complexity; that stretch reads TTTTTASFSVSSQPAPQPPQQSQQ. Residues 106-112 carry the LD motif 2 motif; that stretch reads LDDLDEL. The tract at residues 129 to 311 is disordered; it reads TTPEEHITHA…SPKVVHGDDL (183 aa). Over residues 150 to 161 the composition is skewed to low complexity; it reads NTSSTNSASSLS. 2 stretches are compositionally biased toward polar residues: residues 162–188 and 196–206; these read RPNN…TTKK and TLETTSGNNVY. Low complexity predominate over residues 207-217; that stretch reads SSQPSQSQPQP. Residues 232 to 239 carry the LD motif 3 motif; the sequence is LDELLKGL. Basic residues predominate over residues 258 to 272; the sequence is HQHHHQHQHHHHHNP. The segment covering 273 to 301 has biased composition (low complexity); the sequence is NHNQTQTVTTQINIGRTNTPNNNNNNNTN. The LD motif 4 motif lies at 311–318; it reads LDNLLNNL. LIM zinc-binding domains lie at 334–391, 393–452, 453–510, and 511–569; these read GTCG…QELF, ARCA…TFAV, RCGG…QQAG, and SVCS…KLFA.

The protein belongs to the paxillin family. In terms of tissue distribution, expressed in the upper and lower cup of the fruiting body.

Its subcellular location is the cytoplasm. It is found in the cell cortex. The protein localises to the cell projection. The protein resides in the filopodium. It localises to the cell junction. Its subcellular location is the focal adhesion. It is found in the cytoskeleton. Its function is as follows. Required for cell-substrate adhesion, cell sorting, slug migration, and cell differentiation. May function upstream of limB. The chain is Paxillin-B (paxB) from Dictyostelium discoideum (Social amoeba).